The primary structure comprises 381 residues: MWLKIYLLSILAISVFTFVFLFGALPQFEDTAVWKFRKWLSNRPAAIRSWDSKYCGGRLSVVGDFCGSVVAPAAPWSVPILYCAFTTYMFSAYYEDLHPFIAENHWYYAWLAPVAYTILVVSFVLATFSDPGKITKQNHALLLNQFRFDNLMFLEDTECSTCKFTKPARSKHDRFTNKCVAKFDHYCLWINNTVGLYNYRWFLFFLLGNVWTLCWGALLAGLKMIVMVAAEYKDHPKPLPSIFSQWWQVMITNENKRVGIIFLLSVSTGALACAFTAMHFYYIYLGATTNETDKWGDIHAAISEGSVWMFQKPGFKLDRSILLQKDEEGRPNRSLTAEEREYVAQNGLALTLLTDHKPIVNIYDKGFLNNLKAVMFPNSAY.

The Lumenal segment spans residues 1-4 (MWLK). A helical transmembrane segment spans residues 5-25 (IYLLSILAISVFTFVFLFGAL). Over 26–64 (PQFEDTAVWKFRKWLSNRPAAIRSWDSKYCGGRLSVVGD) the chain is Cytoplasmic. The helical transmembrane segment at 65 to 85 (FCGSVVAPAAPWSVPILYCAF) threads the bilayer. The Lumenal portion of the chain corresponds to 86 to 107 (TTYMFSAYYEDLHPFIAENHWY). The chain crosses the membrane as a helical span at residues 108-128 (YAWLAPVAYTILVVSFVLATF). The Cytoplasmic portion of the chain corresponds to 129-201 (SDPGKITKQN…NTVGLYNYRW (73 aa)). The region spanning 157-207 (TECSTCKFTKPARSKHDRFTNKCVAKFDHYCLWINNTVGLYNYRWFLFFLL) is the DHHC domain. The active-site S-palmitoyl cysteine intermediate is the C187. The chain crosses the membrane as a helical span at residues 202-222 (FLFFLLGNVWTLCWGALLAGL). The Lumenal portion of the chain corresponds to 223-257 (KMIVMVAAEYKDHPKPLPSIFSQWWQVMITNENKR). The helical transmembrane segment at 258 to 278 (VGIIFLLSVSTGALACAFTAM) threads the bilayer. Topologically, residues 279–381 (HFYYIYLGAT…KAVMFPNSAY (103 aa)) are cytoplasmic.

Belongs to the DHHC palmitoyltransferase family. SWF1 subfamily.

Its subcellular location is the endoplasmic reticulum membrane. It carries out the reaction L-cysteinyl-[protein] + hexadecanoyl-CoA = S-hexadecanoyl-L-cysteinyl-[protein] + CoA. Its function is as follows. Palmitoyltransferase that targets several endosomal SNAREs. Palmitoylates the SNAREs at cysteine residues close to the cytoplasmic end of their transmembrane domain. May have a role in the cellular quality control of transmembrane domain-containing proteins. The chain is Palmitoyltransferase SWF1 (SWF1) from Yarrowia lipolytica (strain CLIB 122 / E 150) (Yeast).